A 500-amino-acid polypeptide reads, in one-letter code: Protein FAM114A2 (500 aa).

The interval 1 to 82 (MSNKDDLETA…AAGKETVSKD (82 aa)) is disordered. A phosphoserine mark is found at Ser93, Ser152, and Ser215.

The protein belongs to the FAM114 family.

The sequence is that of Protein FAM114A2 (FAM114A1) from Bos taurus (Bovine).